We begin with the raw amino-acid sequence, 263 residues long: Type III pantothenate kinase (263 aa).

Residue 9–16 coordinates ATP; the sequence is DIGNTSIK. Residues tyrosine 103 and 110–113 each bind substrate; that span reads GADR. The Proton acceptor role is filled by aspartate 112. Aspartate 134 contacts K(+). Threonine 137 contacts ATP. A substrate-binding site is contributed by threonine 190.

It belongs to the type III pantothenate kinase family. In terms of assembly, homodimer. NH4(+) is required as a cofactor. The cofactor is K(+).

The protein resides in the cytoplasm. The catalysed reaction is (R)-pantothenate + ATP = (R)-4'-phosphopantothenate + ADP + H(+). Its pathway is cofactor biosynthesis; coenzyme A biosynthesis; CoA from (R)-pantothenate: step 1/5. In terms of biological role, catalyzes the phosphorylation of pantothenate (Pan), the first step in CoA biosynthesis. This Desulfovibrio desulfuricans (strain ATCC 27774 / DSM 6949 / MB) protein is Type III pantothenate kinase.